We begin with the raw amino-acid sequence, 310 residues long: Pantothenate kinase (310 aa).

Residue 95-102 participates in ATP binding; it reads GSVAVGKS.

This sequence belongs to the prokaryotic pantothenate kinase family.

It localises to the cytoplasm. It catalyses the reaction (R)-pantothenate + ATP = (R)-4'-phosphopantothenate + ADP + H(+). It functions in the pathway cofactor biosynthesis; coenzyme A biosynthesis; CoA from (R)-pantothenate: step 1/5. This chain is Pantothenate kinase, found in Rhodococcus opacus (strain B4).